Consider the following 220-residue polypeptide: Nucleoside diphosphate kinase, mitochondrial (220 aa).

A mitochondrion-targeting transit peptide spans 1 to 57; the sequence is MFSRFARAFPKILASGASQRTFATVQKAFANPTSKKLIVGSSLLIGSAFATTSFVAC. Lys80, Phe128, Arg156, Thr162, Arg173, and Asn183 together coordinate ATP. His186 functions as the Pros-phosphohistidine intermediate in the catalytic mechanism.

The protein belongs to the NDK family. The cofactor is Mg(2+).

Its subcellular location is the mitochondrion intermembrane space. The enzyme catalyses a 2'-deoxyribonucleoside 5'-diphosphate + ATP = a 2'-deoxyribonucleoside 5'-triphosphate + ADP. The catalysed reaction is a ribonucleoside 5'-diphosphate + ATP = a ribonucleoside 5'-triphosphate + ADP. Major role in the synthesis of nucleoside triphosphates other than ATP. The ATP gamma phosphate is transferred to the NDP beta phosphate via a ping-pong mechanism, using a phosphorylated active-site intermediate. In Dictyostelium discoideum (Social amoeba), this protein is Nucleoside diphosphate kinase, mitochondrial (ndkM).